The primary structure comprises 157 residues: Thioredoxin 2 (157 aa).

Residues 1 to 22 (MKHILALVVFIISFFCFKDVNC) form the signal peptide. The region spanning 46–157 (LRMYNKMPRL…ELTSTIRKHL (112 aa)) is the Thioredoxin domain. Active-site nucleophile residues include Cys82 and Cys85. A disulfide bond links Cys82 and Cys85.

Belongs to the thioredoxin family. As to quaternary structure, monomer. Component of the translocon PTEX complex composed of HSP101, EXP2, PTEX150, PTEX88 and TRX2. Post-translationally, the disulfide bond between Cys-82 and Cys-85 acts as a redox-active center and is reduced by thioredoxin reductase TRXR.

In terms of biological role, participates in various redox reactions through the reversible oxidation of its active center dithiol to a disulfide and catalyzes dithiol-disulfide exchange reactions. As part of the translocon PTEX complex, plays a role in the export of parasite proteins into the host erythrocyte. The translocon PTEX complex is a multi-protein machinery resident in the parasite parasitophorous vacuolar membrane, responsible for protein secretion into host cells. May contribute to the unfolding of proteins containing the PEXEL localization motif before their passage through the translocon or regulate the PTEX complex function. This is Thioredoxin 2 from Plasmodium berghei (strain Anka).